A 173-amino-acid polypeptide reads, in one-letter code: Shikimate kinase 1 (173 aa).

Residue glycine 14–threonine 19 participates in ATP binding. Serine 18 lines the Mg(2+) pocket. 3 residues coordinate substrate: aspartate 36, arginine 60, and glycine 82. Residue arginine 120 coordinates ATP. Arginine 140 serves as a coordination point for substrate. Glutamine 157 is a binding site for ATP.

This sequence belongs to the shikimate kinase family. In terms of assembly, monomer. Mg(2+) is required as a cofactor.

It localises to the cytoplasm. The enzyme catalyses shikimate + ATP = 3-phosphoshikimate + ADP + H(+). It functions in the pathway metabolic intermediate biosynthesis; chorismate biosynthesis; chorismate from D-erythrose 4-phosphate and phosphoenolpyruvate: step 5/7. Its function is as follows. Catalyzes the specific phosphorylation of the 3-hydroxyl group of shikimic acid using ATP as a cosubstrate. This chain is Shikimate kinase 1, found in Salmonella typhimurium (strain LT2 / SGSC1412 / ATCC 700720).